Reading from the N-terminus, the 251-residue chain is Ribosome maturation factor RimP (251 aa).

The interval Asn-198–Asp-251 is disordered. Residues Lys-217–Arg-234 are compositionally biased toward basic residues. Residues Leu-235–Ile-245 are compositionally biased toward basic and acidic residues.

It belongs to the RimP family.

The protein resides in the cytoplasm. Functionally, required for maturation of 30S ribosomal subunits. The sequence is that of Ribosome maturation factor RimP from Bradyrhizobium diazoefficiens (strain JCM 10833 / BCRC 13528 / IAM 13628 / NBRC 14792 / USDA 110).